Reading from the N-terminus, the 155-residue chain is Nucleoside diphosphate kinase, cytosolic (155 aa).

ATP is bound by residues K16, F64, R92, T98, R109, and N119. The active-site Pros-phosphohistidine intermediate is the H122.

This sequence belongs to the NDK family. Homohexamer. Mg(2+) is required as a cofactor.

The protein resides in the cytoplasm. It catalyses the reaction a 2'-deoxyribonucleoside 5'-diphosphate + ATP = a 2'-deoxyribonucleoside 5'-triphosphate + ADP. It carries out the reaction a ribonucleoside 5'-diphosphate + ATP = a ribonucleoside 5'-triphosphate + ADP. Functionally, major role in the synthesis of nucleoside triphosphates other than ATP. This chain is Nucleoside diphosphate kinase, cytosolic (ndkC-1), found in Dictyostelium discoideum (Social amoeba).